A 157-amino-acid polypeptide reads, in one-letter code: Phosphopantetheine adenylyltransferase (157 aa).

S8 provides a ligand contact to substrate. Residues S8–F9 and H16 each bind ATP. Substrate is bound by residues K40, T72, and R86. ATP-binding positions include G87–R89, E97, and H122–S128.

This sequence belongs to the bacterial CoaD family. In terms of assembly, homohexamer. Mg(2+) is required as a cofactor.

The protein resides in the cytoplasm. The enzyme catalyses (R)-4'-phosphopantetheine + ATP + H(+) = 3'-dephospho-CoA + diphosphate. It functions in the pathway cofactor biosynthesis; coenzyme A biosynthesis; CoA from (R)-pantothenate: step 4/5. Reversibly transfers an adenylyl group from ATP to 4'-phosphopantetheine, yielding dephospho-CoA (dPCoA) and pyrophosphate. The protein is Phosphopantetheine adenylyltransferase of Prochlorococcus marinus (strain MIT 9303).